A 488-amino-acid polypeptide reads, in one-letter code: (Z)-2-((N-methylformamido)methylene)-5-hydroxybutyrolactone dehydrogenase (488 aa).

NAD(+) is bound by residues 149–150 (WN) and 226–227 (GG). The active-site Proton acceptor is the glutamate 248. Leucine 249 lines the NAD(+) pocket. Cysteine 282 functions as the Nucleophile in the catalytic mechanism. Position 380 (glutamate 380) interacts with NAD(+).

This sequence belongs to the aldehyde dehydrogenase family. In terms of assembly, homodimer.

The enzyme catalyses (Z)-2-((N-methylformamido)methylene)-5-hydroxybutanolactone + NAD(+) + H2O = (E)-2-((N-methylformamido) methylene)succinate + NADH + 3 H(+). Involved in the degradation of the pyridine ring of trigonelline (TG; N-methylnicotinate) into succinate and methylamine as carbon and nitrogen sources, respectively. Catalyzes the NAD(+)-dependent oxidation of (Z)-2-((N-methylformamido)methylene)-5-hydroxybutyrolactone (MFMB) to yield (E)-2-((N-methylformamido)methylene)succinate (MFMS). This Acinetobacter baylyi (strain ATCC 33305 / BD413 / ADP1) protein is (Z)-2-((N-methylformamido)methylene)-5-hydroxybutyrolactone dehydrogenase.